Reading from the N-terminus, the 105-residue chain is Vacuolar ATPase assembly integral membrane protein VMA21 homolog (105 aa).

Residues 1–26 form a disordered region; sequence MSTKNKKAAGGNGGAPKQTRQQSHDS. Topologically, residues 1–36 are cytoplasmic; the sequence is MSTKNKKAAGGNGGAPKQTRQQSHDSQDYSSFKTVL. A helical transmembrane segment spans residues 37 to 57; sequence FYCMLIVFLPVLTFFVLKGFV. The Lumenal portion of the chain corresponds to 58–68; sequence LDQFLNISEVK. Residues 69 to 89 traverse the membrane as a helical segment; sequence VNIASAVGAVVALHIALGLYI. Topologically, residues 90 to 105 are cytoplasmic; it reads YRAYFGAPGSKGSKTD.

The protein belongs to the VMA21 family.

The protein resides in the endoplasmic reticulum membrane. It localises to the endoplasmic reticulum-Golgi intermediate compartment membrane. It is found in the cytoplasmic vesicle. Its subcellular location is the COPII-coated vesicle membrane. Functionally, required for the assembly of the V0 complex of the vacuolar ATPase (V-ATPase) in the endoplasmic reticulum. This chain is Vacuolar ATPase assembly integral membrane protein VMA21 homolog, found in Drosophila sechellia (Fruit fly).